The sequence spans 509 residues: Acetyl-coenzyme A carboxylase carboxyl transferase subunit beta, chloroplastic (509 aa).

A disordered region spans residues 164 to 216 (HGSVCDGESHNSSEGESSSRRTHTKGVDLTIRESSNENERESSNENERKSSND). 2 stretches are compositionally biased toward basic and acidic residues: residues 170–182 (GESH…ESSS) and 193–216 (TIRE…SSND). In terms of domain architecture, CoA carboxyltransferase N-terminal spans 226-509 (LWLQCENCYG…LNQNSNQVEC (284 aa)). Residues Cys-230, Cys-233, Cys-249, and Cys-252 each contribute to the Zn(2+) site. Residues 230 to 252 (CENCYGLNYKKFLKSKMNICEQC) form a C4-type zinc finger. The tract at residues 288 to 307 (FDSEGEQEQEQEQEQEEEET) is disordered.

Belongs to the AccD/PCCB family. As to quaternary structure, acetyl-CoA carboxylase is a heterohexamer composed of biotin carboxyl carrier protein, biotin carboxylase and 2 subunits each of ACCase subunit alpha and ACCase plastid-coded subunit beta (accD). It depends on Zn(2+) as a cofactor.

The protein localises to the plastid. Its subcellular location is the chloroplast stroma. It carries out the reaction N(6)-carboxybiotinyl-L-lysyl-[protein] + acetyl-CoA = N(6)-biotinyl-L-lysyl-[protein] + malonyl-CoA. It functions in the pathway lipid metabolism; malonyl-CoA biosynthesis; malonyl-CoA from acetyl-CoA: step 1/1. Component of the acetyl coenzyme A carboxylase (ACC) complex. Biotin carboxylase (BC) catalyzes the carboxylation of biotin on its carrier protein (BCCP) and then the CO(2) group is transferred by the transcarboxylase to acetyl-CoA to form malonyl-CoA. The polypeptide is Acetyl-coenzyme A carboxylase carboxyl transferase subunit beta, chloroplastic (Ipomoea purpurea (Common morning glory)).